The following is a 790-amino-acid chain: Serine/threonine-protein kinase DCLK3 (790 aa).

Residues 1–37 (MPAAPVLRPPPPPATPAPPAPSRPAPPIPGHRGPCDH) are disordered. The segment covering 7–29 (LRPPPPPATPAPPAPSRPAPPIP) has biased composition (pro residues). One can recognise a Doublecortin domain in the interval 97–183 (RVVTVVKLGG…KEPLTLKSIQ (87 aa)). Positions 201–218 (HSRVPSPRLRSRLPSKLL) are enriched in low complexity. 2 disordered regions span residues 201–290 (HSRV…SGEK) and 315–506 (LQLG…KGII). 4 stretches are compositionally biased toward basic and acidic residues: residues 332–345 (DLGR…EKLV), 352–400 (RPSE…ESQD), 425–434 (IDMRREDRHT), and 457–496 (TRGE…ERPS). A Protein kinase domain is found at 514–771 (YDIGGVIGDG…AEQVLQHPWI (258 aa)). ATP contacts are provided by residues 520–528 (IGDGNFATV) and Lys-543. Asp-635 functions as the Proton acceptor in the catalytic mechanism.

This sequence belongs to the protein kinase superfamily. CAMK Ser/Thr protein kinase family. CaMK subfamily. Highly expressed in brain and to a lower extent in liver and kidney.

It is found in the cytoplasm. It localises to the nucleus. It catalyses the reaction L-seryl-[protein] + ATP = O-phospho-L-seryl-[protein] + ADP + H(+). It carries out the reaction L-threonyl-[protein] + ATP = O-phospho-L-threonyl-[protein] + ADP + H(+). The chain is Serine/threonine-protein kinase DCLK3 (Dclk3) from Mus musculus (Mouse).